The sequence spans 61 residues: Large ribosomal subunit protein uL30 (61 aa).

This sequence belongs to the universal ribosomal protein uL30 family. In terms of assembly, part of the 50S ribosomal subunit.

This chain is Large ribosomal subunit protein uL30, found in Corynebacterium glutamicum (strain ATCC 13032 / DSM 20300 / JCM 1318 / BCRC 11384 / CCUG 27702 / LMG 3730 / NBRC 12168 / NCIMB 10025 / NRRL B-2784 / 534).